The following is a 1024-amino-acid chain: Gamma-tubulin complex component 5 (1024 aa).

Disordered regions lie at residues 153–203, 523–545, and 853–873; these read IGLG…GGPQ, NEDKVSDSASASSGSDQGPSSRQ, and SQAKEDIPRDQDTPSQFGPPK. Basic and acidic residues predominate over residues 189-198; that stretch reads TPLEEQDHNR. The span at 529–543 shows a compositional bias: low complexity; that stretch reads DSASASSGSDQGPSS. Basic and acidic residues predominate over residues 853–864; sequence SQAKEDIPRDQD.

This sequence belongs to the TUBGCP family. As to quaternary structure, component of the gamma-tubulin ring complex (gTuRC) consisting of TUBGCP2, TUBGCP3, TUBGCP4, TUBGCP5 and TUBGCP6 and gamma-tubulin TUBG1 or TUBG2. TUBGCP2, TUBGCP3, TUBGCP4, TUBGCP5 and TUBGCP6 assemble in a 5:5:2:1:1 stoichiometry; each is associated with a gamma-tubulin, thereby arranging 14 gamma-tubulins in a helical manner. Gamma-tubulin at the first position is blocked by TUBGCP3 at the last position, allowing 13 protafilaments to grow into a microtubule. The gTuRC (via TUBGCP3 and TUBGCP6) interacts with ACTB and MZT1; the interactions form a luminal bridge that stabilizes the initial structure during complex assembly. The gTuRC (via TUBGCP2) interacts with MZT2A/MZT2B and CDK5RAP2 (via CM1 motif); the interactions play a role in gTuRC activation.

It is found in the cytoplasm. The protein localises to the cytoskeleton. Its subcellular location is the microtubule organizing center. It localises to the centrosome. Functionally, component of the gamma-tubulin ring complex (gTuRC) which mediates microtubule nucleation. The gTuRC regulates the minus-end nucleation of alpha-beta tubulin heterodimers that grow into microtubule protafilaments, a critical step in centrosome duplication and spindle formation. The protein is Gamma-tubulin complex component 5 (Tubgcp5) of Mus musculus (Mouse).